We begin with the raw amino-acid sequence, 889 residues long: Cytoplasmic aconitate hydratase (889 aa).

Residues Gln-86 and 205–207 (DSH) each bind substrate. Residues Cys-437, Cys-503, and Cys-506 each contribute to the [4Fe-4S] cluster site. Residues Arg-536, Arg-541, Arg-699, and 779–780 (SR) each bind substrate.

Belongs to the aconitase/IPM isomerase family. Interacts (when associated with the 4Fe-4S) with FBXL5. Interacts with frataxin(81-210). It depends on [4Fe-4S] cluster as a cofactor.

The protein localises to the cytoplasm. Its subcellular location is the cytosol. It carries out the reaction citrate = D-threo-isocitrate. Functionally, bifunctional iron sensor that switches between 2 activities depending on iron availability. Iron deprivation, promotes its mRNA binding activity through which it regulates the expression of genes involved in iron uptake, sequestration and utilization. Binds to iron-responsive elements (IRES) in the untranslated region of target mRNAs preventing for instance the translation of ferritin and aminolevulinic acid synthase and stabilizing the transferrin receptor mRNA. Conversely, when cellular iron levels are high, binds a 4Fe-4S cluster which precludes RNA binding activity and promotes the aconitase activity, the isomerization of citrate to isocitrate via cis-aconitate. The protein is Cytoplasmic aconitate hydratase (Aco1) of Rattus norvegicus (Rat).